The following is a 352-amino-acid chain: Glycoprotein integral membrane protein 1 (352 aa).

Positions Met1–Ser25 are cleaved as a signal peptide. At Lys26 to Val281 the chain is on the extracellular side. N-linked (GlcNAc...) asparagine glycosylation is found at Asn36, Asn44, Asn89, Asn109, Asn151, and Asn197. The disordered stretch occupies residues Asn206–Ser245. The span at Leu225–Asp244 shows a compositional bias: basic and acidic residues. Residues Pro282–Ile302 form a helical membrane-spanning segment. Topologically, residues Lys303–Lys352 are cytoplasmic.

Its subcellular location is the membrane. This chain is Glycoprotein integral membrane protein 1 (ginm1), found in Danio rerio (Zebrafish).